The following is a 120-amino-acid chain: Chaperonin GroEL (120 aa).

Residue 23 to 27 (DGTTT) participates in ATP binding.

The protein belongs to the chaperonin (HSP60) family. As to quaternary structure, forms a cylinder of 14 subunits composed of two heptameric rings stacked back-to-back. Interacts with the co-chaperonin GroES.

Its subcellular location is the cytoplasm. The enzyme catalyses ATP + H2O + a folded polypeptide = ADP + phosphate + an unfolded polypeptide.. Its function is as follows. Together with its co-chaperonin GroES, plays an essential role in assisting protein folding. The GroEL-GroES system forms a nano-cage that allows encapsulation of the non-native substrate proteins and provides a physical environment optimized to promote and accelerate protein folding. The protein is Chaperonin GroEL of Mycolicibacter nonchromogenicus (Mycobacterium nonchromogenicum).